The sequence spans 145 residues: MKFFCKLESGSSLPEYATSGASGADVRANISEPIAILPGQRALIPTGISVDIPHGYEIQVRSRSGLAVKYGVIVLQSPGTVDADYRGEIRVILANLGESTFIVEPGMRIAQLVVAKVEQVSFVETQEELTATARGTGGFGHTGEC.

Substrate is bound by residues Arg-63 to Gly-65, Gln-76, and Thr-80 to Asp-82.

It belongs to the dUTPase family. Mg(2+) is required as a cofactor.

It catalyses the reaction dUTP + H2O = dUMP + diphosphate + H(+). The protein operates within pyrimidine metabolism; dUMP biosynthesis; dUMP from dCTP (dUTP route): step 2/2. This enzyme is involved in nucleotide metabolism: it produces dUMP, the immediate precursor of thymidine nucleotides and it decreases the intracellular concentration of dUTP so that uracil cannot be incorporated into DNA. The polypeptide is Deoxyuridine 5'-triphosphate nucleotidohydrolase (Chlamydia muridarum (strain MoPn / Nigg)).